The chain runs to 328 residues: DNA-directed RNA polymerase subunit alpha (328 aa).

The segment at Met-1 to Glu-230 is alpha N-terminal domain (alpha-NTD). An alpha C-terminal domain (alpha-CTD) region spans residues Arg-248–Ser-328.

Belongs to the RNA polymerase alpha chain family. As to quaternary structure, homodimer. The RNAP catalytic core consists of 2 alpha, 1 beta, 1 beta' and 1 omega subunit. When a sigma factor is associated with the core the holoenzyme is formed, which can initiate transcription.

The catalysed reaction is RNA(n) + a ribonucleoside 5'-triphosphate = RNA(n+1) + diphosphate. Functionally, DNA-dependent RNA polymerase catalyzes the transcription of DNA into RNA using the four ribonucleoside triphosphates as substrates. This Salinibacter ruber (strain DSM 13855 / M31) protein is DNA-directed RNA polymerase subunit alpha.